The sequence spans 274 residues: Diaminopimelate epimerase (274 aa).

Residues N13, Q47, and N65 each coordinate substrate. C74 functions as the Proton donor in the catalytic mechanism. Residues 75–76 (GN), N149, N182, and 200–201 (ER) each bind substrate. C209 (proton acceptor) is an active-site residue. 210–211 (GT) is a substrate binding site.

It belongs to the diaminopimelate epimerase family. As to quaternary structure, homodimer.

It is found in the cytoplasm. The catalysed reaction is (2S,6S)-2,6-diaminopimelate = meso-2,6-diaminopimelate. The protein operates within amino-acid biosynthesis; L-lysine biosynthesis via DAP pathway; DL-2,6-diaminopimelate from LL-2,6-diaminopimelate: step 1/1. Functionally, catalyzes the stereoinversion of LL-2,6-diaminopimelate (L,L-DAP) to meso-diaminopimelate (meso-DAP), a precursor of L-lysine and an essential component of the bacterial peptidoglycan. The protein is Diaminopimelate epimerase of Rhizorhabdus wittichii (strain DSM 6014 / CCUG 31198 / JCM 15750 / NBRC 105917 / EY 4224 / RW1) (Sphingomonas wittichii).